Here is a 226-residue protein sequence, read N- to C-terminus: Protein BASIC PENTACYSTEINE7 (226 aa).

The disordered stretch occupies residues 42–116 (IDLSQEPPAE…PSIPETKREK (75 aa)). Basic and acidic residues predominate over residues 66 to 76 (RDSRNDTETVK). Positions 88-105 (LKPKPQRKKRSVSNKSKK) are enriched in basic residues.

The protein belongs to the BBR/BPC family. As to expression, expressed in seedlings, leaves and pistils. Detected in anthers, in pollen grains, in young rosette, in leaf vasculature, in the lateral and primary roots, in embryo sac, and in the whole ovule.

The protein resides in the nucleus. Transcriptional regulator that specifically binds to GA-rich elements (GAGA-repeats) present in regulatory sequences of genes involved in developmental processes. The sequence is that of Protein BASIC PENTACYSTEINE7 (BPC7) from Arabidopsis thaliana (Mouse-ear cress).